The primary structure comprises 734 residues: Tripartite terminase subunit 3 (734 aa).

Residues 184-190 (ASKRARV) carry the Nuclear localization signal motif. The Walker A motif signature appears at 259–266 (VPRRHGKT). A Walker B motif motif is present at residues 353 to 358 (LLFVDE). Glu358 functions as the For ATPase activity in the catalytic mechanism. Active-site for nuclease activity residues include Asp511, Glu583, and Asp707.

It belongs to the herpesviridae TRM3 protein family. As to quaternary structure, interacts with the terminase subunits TRM1 and TRM2. Interacts with portal protein.

It localises to the host nucleus. In terms of biological role, component of the molecular motor that translocates viral genomic DNA in empty capsid during DNA packaging. Forms a tripartite terminase complex together with TRM1 and TRM2 in the host cytoplasm. Once the complex reaches the host nucleus, it interacts with the capsid portal vertex. This portal forms a ring in which genomic DNA is translocated into the capsid. TRM3 carries an RNase H-like nuclease activity that plays an important role for the cleavage of concatemeric viral DNA into unit length genomes. This is Tripartite terminase subunit 3 from Equus caballus (Horse).